We begin with the raw amino-acid sequence, 2471 residues long: Neurogenic locus notch homolog protein 2 (2471 aa).

An N-terminal signal peptide occupies residues 1-25 (MPALRPALLWALLALWLCCAAPAHA). 4 consecutive EGF-like domains span residues 26-63 (LQCR…EYCQ), 64-102 (HRDP…EDCQ), 105-143 (TSHP…KECQ), and 144-180 (WTDA…QKCE). Residues 26–1677 (LQCRDGYEPC…SESLTPERTQ (1652 aa)) are Extracellular-facing. Disulfide bonds link Cys28–Cys41, Cys35–Cys51, Cys53–Cys62, Cys68–Cys79, Cys73–Cys90, Cys92–Cys101, Cys109–Cys121, Cys115–Cys131, Cys133–Cys142, Cys148–Cys159, Cys153–Cys168, Cys170–Cys179, Cys186–Cys198, Cys192–Cys207, Cys209–Cys218, Cys225–Cys236, Cys230–Cys246, Cys248–Cys257, Cys264–Cys275, Cys269–Cys284, Cys286–Cys295, Cys302–Cys315, Cys309–Cys324, Cys326–Cys335, Cys342–Cys353, Cys347–Cys362, Cys364–Cys373, Cys379–Cys390, Cys384–Cys401, Cys403–Cys412, Cys419–Cys433, Cys427–Cys442, Cys444–Cys453, Cys460–Cys471, Cys465–Cys480, Cys482–Cys491, Cys498–Cys509, Cys503–Cys518, Cys520–Cys529, Cys536–Cys547, Cys541–Cys556, Cys558–Cys567, Cys574–Cys584, Cys579–Cys593, Cys595–Cys604, Cys611–Cys622, Cys616–Cys631, Cys633–Cys642, Cys649–Cys659, Cys654–Cys668, Cys670–Cys679, Cys686–Cys697, Cys691–Cys706, Cys708–Cys717, Cys724–Cys734, Cys729–Cys743, Cys745–Cys754, Cys761–Cys772, Cys766–Cys781, Cys783–Cys792, Cys799–Cys810, Cys804–Cys819, Cys821–Cys830, Cys837–Cys848, Cys842–Cys859, Cys861–Cys870, Cys877–Cys888, Cys882–Cys897, Cys899–Cys908, Cys915–Cys926, Cys920–Cys935, Cys937–Cys946, Cys953–Cys964, Cys958–Cys973, Cys975–Cys984, Cys991–Cys1002, Cys996–Cys1011, Cys1013–Cys1022, Cys1029–Cys1040, Cys1034–Cys1049, Cys1051–Cys1060, Cys1067–Cys1078, Cys1072–Cys1087, and Cys1089–Cys1098. A glycan (N-linked (GlcNAc...) asparagine) is linked at Asn46. The N-linked (GlcNAc...) asparagine glycan is linked to Asn155. The 38-residue stretch at 182–219 (DVNECDIPGHCQHGGTCLNLPGSYQCQCPQGFTGQYCD) folds into the EGF-like 5; calcium-binding domain. The EGF-like 6 domain occupies 221-258 (LYVPCAPSPCVNGGTCRQTGDFTFECNCLPGFEGSTCE). The EGF-like 7; calcium-binding domain maps to 260–296 (NIDDCPNHRCQNGGVCVDGVNTYNCRCPPQWTGQFCT). The EGF-like 8; calcium-binding domain maps to 298–336 (DVDECLLQPNACQNGGTCANRNGGYGCVCVNGWSGDDCS). Residues 338–374 (NIDDCAFASCTPGSTCIDRVASFSCMCPEGKAGLLCH) form the EGF-like 9; calcium-binding domain. Residues 375–413 (LDDACISNPCHKGALCDTNPLNGQYICTCPQGYKGADCT) enclose the EGF-like 10 domain. Positions 415-454 (DVDECAMANSNPCEHAGKCVNTDGAFHCECLKGYAGPRCE) constitute an EGF-like 11; calcium-binding domain. An EGF-like 12; calcium-binding domain is found at 456 to 492 (DINECHSDPCQNDATCLDKIGGFTCLCMPGFKGVHCE). An EGF-like 13; calcium-binding domain is found at 494-530 (EINECQSNPCVNNGQCVDKVNRFQCLCPPGFTGPVCQ). The EGF-like 14; calcium-binding domain maps to 532–568 (DIDDCSSTPCLNGAKCIDHPNGYECQCATGFTGVLCE). An EGF-like 15; calcium-binding domain is found at 570–605 (NIDNCDPDPCHHGQCQDGIDSYTCICNPGYMGAICS). An EGF-like 16; calcium-binding domain is found at 607–643 (QIDECYSSPCLNDGRCIDLVNGYQCNCQPGTSGVNCE). Ser613 carries O-linked (Glc...) serine; alternate glycosylation. Residue Ser613 is glycosylated (O-linked (Xyl...) serine; alternate). The region spanning 645 to 680 (NFDDCASNPCIHGICMDGINRYSCVCSPGFTGQRCN) is the EGF-like 17; calcium-binding domain. One can recognise an EGF-like 18; calcium-binding domain in the interval 682-718 (DIDECASNPCRKGATCINGVNGFRCICPEGPHHPSCY). One can recognise an EGF-like 19 domain in the interval 720–755 (QVNECLSNPCIHGNCTGGLSGYKCLCDAGWVGINCE). N-linked (GlcNAc...) asparagine glycosylation is present at Asn733. Positions 757–793 (DKNECLSNPCQNGGTCDNLVNGYRCTCKKGFKGYNCQ) constitute an EGF-like 20; calcium-binding domain. An EGF-like 21; calcium-binding domain is found at 795–831 (NIDECASNPCLNQGTCFDDISGYTCHCVLPYTGKNCQ). The EGF-like 22 domain maps to 833–871 (VLAPCSPNPCENAAVCKESPNFESYTCLCAPGWQGQRCT). An EGF-like 23; calcium-binding domain is found at 873 to 909 (DIDECISKPCMNHGLCHNTQGSYMCECPPGFSGMDCE). The region spanning 911–947 (DIDDCLANPCQNGGSCMDGVNTFSCLCLPGFTGDKCQ) is the EGF-like 24; calcium-binding domain. The 37-residue stretch at 949–985 (DMNECLSEPCKNGGTCSDYVNSYTCKCQAGFDGVHCE) folds into the EGF-like 25; calcium-binding domain. Positions 987 to 1023 (NINECTESSCFNGGTCVDGINSFSCLCPVGFTGSFCL) constitute an EGF-like 26; calcium-binding domain. In terms of domain architecture, EGF-like 27; calcium-binding spans 1025–1061 (EINECSSHPCLNEGTCVDGLGTYRCSCPLGYTGKNCQ). EGF-like domains are found at residues 1063–1099 (LVNL…AYCD) and 1101–1147 (PNVS…SYCE). Asn1102 carries N-linked (GlcNAc...) asparagine glycosylation. Disulfide bonds link Cys1105/Cys1126, Cys1120/Cys1135, Cys1137/Cys1146, Cys1153/Cys1164, Cys1158/Cys1173, Cys1175/Cys1184, Cys1191/Cys1202, Cys1196/Cys1211, Cys1213/Cys1222, Cys1229/Cys1241, Cys1235/Cys1250, Cys1252/Cys1261, Cys1268/Cys1281, Cys1273/Cys1290, Cys1292/Cys1301, Cys1308/Cys1319, Cys1313/Cys1331, Cys1333/Cys1342, Cys1378/Cys1389, Cys1383/Cys1400, Cys1402/Cys1411, Cys1425/Cys1448, Cys1430/Cys1443, and Cys1439/Cys1455. An EGF-like 30; calcium-binding domain is found at 1149 to 1185 (QLDECASNPCQHGATCSDFIGGYRCECVPGYQGVNCE). The EGF-like 31; calcium-binding domain occupies 1187–1223 (EVDECQNQPCQNGGTCIDLVNHFKCSCPPGTRGLLCE). Residues 1225 to 1262 (NIDDCARGPHCLNGGQCMDRIGGYSCRCLPGFAGERCE) enclose the EGF-like 32; calcium-binding domain. EGF-like domains are found at residues 1264 to 1302 (DINE…RHCE), 1304 to 1343 (FVDV…ARCQ), and 1374 to 1412 (CESG…SRCE). 3 LNR repeats span residues 1425-1465 (CLSQ…PWAN), 1466-1502 (CSSP…NSKT), and 1503-1544 (CKYD…NLAE). The segment at 1425–1677 (CLSQYCADKA…SESLTPERTQ (253 aa)) is negative regulatory region (NRR). N-linked (GlcNAc...) asparagine glycosylation occurs at Asn1465. Intrachain disulfides connect Cys1466/Cys1489, Cys1472/Cys1484, Cys1480/Cys1496, Cys1503/Cys1527, Cys1509/Cys1522, Cys1518/Cys1534, and Cys1632/Cys1639. A helical transmembrane segment spans residues 1678 to 1698 (LLYLLAVAVVIILFIILLGVI). Over 1699-2471 (MAKRKRKHGS…PPHNNMQVYA (773 aa)) the chain is Cytoplasmic. Position 1716 is a phosphothreonine (Thr1716). The segment at 1754-1788 (TSEHWVDDEGPQPKKVKAEDEALLSEEDDPIDRRP) is disordered. Positions 1774–1783 (EALLSEEDDP) are enriched in acidic residues. Ser1778 bears the Phosphoserine mark. Position 1802 is a phosphothreonine (Thr1802). Phosphoserine is present on Ser1804. Thr1808 is subject to Phosphothreonine. ANK repeat units lie at residues 1827–1871 (DGCT…SLQA), 1876–1905 (TGEM…DANA), 1909–1939 (MGRC…DLDA), 1943–1972 (DGTT…DVNA), 1976–2005 (HGKS…NRDM), and 2009–2038 (KEET…NRDI). Phosphoserine occurs at positions 1842 and 1845. 3 positions are modified to phosphoserine: Ser2070, Ser2078, and Ser2081. 2 disordered regions span residues 2091–2168 (FLSL…TSSP) and 2380–2471 (VGKY…QVYA). The residue at position 2097 (Thr2097) is a Phosphothreonine. The segment covering 2098–2107 (PMGKKSRRPS) has biased composition (basic residues). Composition is skewed to polar residues over residues 2108–2117 (AKSTMPTSLP), 2137–2150 (EKVQ…TLSP), 2159–2168 (TYVSDTTSSP), and 2388–2406 (SQHS…SHSG). Over residues 2417–2445 (PSPESPDQWSSSSPHSASDWSDVTTSPTP) the composition is skewed to low complexity.

Belongs to the NOTCH family. Heterodimer of a C-terminal fragment N(TM) and an N-terminal fragment N(EC) which are probably linked by disulfide bonds. Interacts with MAML1, MAML2 and MAML3 which act as transcriptional coactivators for NOTCH2. Interacts with RELA/p65. Interacts with HIF1AN. Interacts (via ANK repeats) with TCIM, the interaction inhibits the nuclear translocation of NOTCH2 N2ICD. Interacts with CUL1, RBX1, SKP1 and FBXW7 that are SCF(FBXW7) E3 ubiquitin-protein ligase complex components. Interacts with MINAR1; this interaction increases MINAR1 stability and function. Interacts with NOTCH2NL (NOTCH2NLA, NOTCH2NLB and/or NOTCH2NLC); leading to enhance Notch signaling pathway in a non-cell-autonomous manner. Interacts with MDK; this interaction mediates a nuclear accumulation of NOTCH2 and therefore activation of NOTCH2 signaling leading to interaction between HES1 and STAT3. Interacts with MINAR2. In terms of processing, synthesized in the endoplasmic reticulum as an inactive form which is proteolytically cleaved by a furin-like convertase in the trans-Golgi network before it reaches the plasma membrane to yield an active, ligand-accessible form. Cleavage results in a C-terminal fragment N(TM) and a N-terminal fragment N(EC). Following ligand binding, it is cleaved by TNF-alpha converting enzyme (TACE) to yield a membrane-associated intermediate fragment called notch extracellular truncation (NEXT). This fragment is then cleaved by presenilin dependent gamma-secretase to release a notch-derived peptide containing the intracellular domain (NICD) from the membrane. Post-translationally, hydroxylated by HIF1AN. Can be either O-glucosylated or O-xylosylated at Ser-613 by POGLUT1. In terms of processing, phosphorylated by GSK3. GSK3-mediated phosphorylation is necessary for NOTCH2 recognition by FBXW7, ubiquitination and degradation via the ubiquitin proteasome pathway. As to expression, expressed in the brain, heart, kidney, lung, skeletal muscle and liver. Ubiquitously expressed in the embryo.

The protein resides in the cell membrane. It is found in the nucleus. The protein localises to the cytoplasm. Functionally, functions as a receptor for membrane-bound ligands Jagged-1 (JAG1), Jagged-2 (JAG2) and Delta-1 (DLL1) to regulate cell-fate determination. Upon ligand activation through the released notch intracellular domain (NICD) it forms a transcriptional activator complex with RBPJ/RBPSUH and activates genes of the enhancer of split locus. Affects the implementation of differentiation, proliferation and apoptotic programs. Involved in bone remodeling and homeostasis. In collaboration with RELA/p65 enhances NFATc1 promoter activity and positively regulates RANKL-induced osteoclast differentiation. Positively regulates self-renewal of liver cancer cells. The polypeptide is Neurogenic locus notch homolog protein 2 (Homo sapiens (Human)).